The chain runs to 77 residues: Probable Fe(2+)-trafficking protein (77 aa).

It belongs to the Fe(2+)-trafficking protein family. As to quaternary structure, monomer.

Could be a mediator in iron transactions between iron acquisition and iron-requiring processes, such as synthesis and/or repair of Fe-S clusters in biosynthetic enzymes. This chain is Probable Fe(2+)-trafficking protein, found in Buchnera aphidicola subsp. Acyrthosiphon pisum (strain APS) (Acyrthosiphon pisum symbiotic bacterium).